We begin with the raw amino-acid sequence, 673 residues long: Probable lysophospholipase 4 (673 aa).

Residues 1–19 (MYVNYIGLFAFVQISLTLA) form the signal peptide. N-linked (GlcNAc...) asparagine glycosylation is found at N72, N125, N191, N194, N272, N301, N374, N404, N409, N481, N516, N545, and N574. The region spanning 74–615 (TCSNDNLLRP…QEYCWDGTLA (542 aa)) is the PLA2c domain. Residues 631 to 653 (TTSRAPSGTTSGTASSTTSSSVA) form a disordered region.

This sequence belongs to the lysophospholipase family.

It localises to the secreted. The catalysed reaction is a 1-acyl-sn-glycero-3-phosphocholine + H2O = sn-glycerol 3-phosphocholine + a fatty acid + H(+). Functionally, catalyzes the release of fatty acids from lysophospholipids. This is Probable lysophospholipase 4 (plb4) from Schizosaccharomyces pombe (strain 972 / ATCC 24843) (Fission yeast).